A 479-amino-acid polypeptide reads, in one-letter code: Glycerol-3-phosphate acyltransferase RAM2 (479 aa).

Transmembrane regions (helical) follow at residues 14–34 (YFAL…LVLA), 37–57 (LAGL…LIFA), 215–235 (SPLM…LACL), and 237–257 (IAAG…ALGV). Residues 284–289 (HRTLLD) carry the HXXXXD motif motif. Asn-448 carries an N-linked (GlcNAc...) asparagine glycan.

This sequence belongs to the GPAT/DAPAT family.

It is found in the membrane. It carries out the reaction sn-glycerol 3-phosphate + an acyl-CoA = a 1-acyl-sn-glycero-3-phosphate + CoA. Its pathway is lipid metabolism; glycerolipid metabolism. Involved in the production of cutin monomers. Esterifies acyl-group from acyl-ACP to the sn-2 position of glycerol-3-phosphate, a step in cutin biosynthesis. Required for colonization of the root by mycorrhizal fungi, and appropriate hyphopodia and arbuscule formation. Cutin monomers act as plant signals that promote colonization by arbuscular mycorrhizal fungi. This signaling function has been recruited by pathogenic oomycetes to facilitate appressoria formation and their own invasion. The chain is Glycerol-3-phosphate acyltransferase RAM2 from Petunia hybrida (Petunia).